A 126-amino-acid polypeptide reads, in one-letter code: MNITLLKSKIHRASVTEARLDYIGSISIDEKLLQASGILEYEKVQVVNVNNGARFETYTIATQEEGVVCLNGAAARLAEVGDKVIIMSYADFNEEEAKTFKPKVVFVDENNTATKITNYEKHGAIF.

The active-site Schiff-base intermediate with substrate; via pyruvic acid is serine 25. Residue serine 25 is modified to Pyruvic acid (Ser). Position 57 (threonine 57) interacts with substrate. Tyrosine 58 functions as the Proton donor in the catalytic mechanism. Substrate is bound at residue 72–74 (GAA).

This sequence belongs to the PanD family. In terms of assembly, heterooctamer of four alpha and four beta subunits. The cofactor is pyruvate. In terms of processing, is synthesized initially as an inactive proenzyme, which is activated by self-cleavage at a specific serine bond to produce a beta-subunit with a hydroxyl group at its C-terminus and an alpha-subunit with a pyruvoyl group at its N-terminus.

The protein resides in the cytoplasm. The enzyme catalyses L-aspartate + H(+) = beta-alanine + CO2. Its pathway is cofactor biosynthesis; (R)-pantothenate biosynthesis; beta-alanine from L-aspartate: step 1/1. Catalyzes the pyruvoyl-dependent decarboxylation of aspartate to produce beta-alanine. The polypeptide is Aspartate 1-decarboxylase (Campylobacter jejuni subsp. jejuni serotype O:6 (strain 81116 / NCTC 11828)).